The following is a 79-amino-acid chain: Protein AC4 (79 aa).

2 disordered regions span residues 1–24 (MCSY…SPQP) and 36–79 (LNPA…MPRR). Residues 38-47 (PAPTSSPTST) show a composition bias toward low complexity. The span at 48-61 (RTEIQLNGENSRST) shows a compositional bias: polar residues.

This sequence belongs to the geminiviridae protein AC4/C4 family.

Its function is as follows. Pathogenicity determinant. May act as a suppressor of RNA-mediated gene silencing, also known as post-transcriptional gene silencing (PTGS), a mechanism of plant viral defense that limits the accumulation of viral RNAs. This is Protein AC4 from Abutilon (Upland cotton).